Consider the following 142-residue polypeptide: 3-hydroxyacyl-[acyl-carrier-protein] dehydratase FabZ (142 aa).

His-48 is a catalytic residue.

It belongs to the thioester dehydratase family. FabZ subfamily.

The protein localises to the cytoplasm. The enzyme catalyses a (3R)-hydroxyacyl-[ACP] = a (2E)-enoyl-[ACP] + H2O. Involved in unsaturated fatty acids biosynthesis. Catalyzes the dehydration of short chain beta-hydroxyacyl-ACPs and long chain saturated and unsaturated beta-hydroxyacyl-ACPs. The sequence is that of 3-hydroxyacyl-[acyl-carrier-protein] dehydratase FabZ from Natranaerobius thermophilus (strain ATCC BAA-1301 / DSM 18059 / JW/NM-WN-LF).